The following is a 1151-amino-acid chain: Cation channel sperm-associated protein subunit gamma 1 (1151 aa).

A signal peptide spans 1 to 38 (MVSRPAMSPVSPVWPRKPNLWAFWVLRLVLLLSLKSWA). Residues 39-1063 (EDTLQHCTWL…GLPLSSKRSS (1025 aa)) are Extracellular-facing. N-linked (GlcNAc...) asparagine glycosylation occurs at asparagine 356. Residues 1064–1084 (FIVMVSTSFFIALVVFYILFC) traverse the membrane as a helical segment. Topologically, residues 1085–1151 (LVWPHIVKAW…NVQAKRAKVA (67 aa)) are cytoplasmic. The span at 1113–1123 (SSSSGGFTLHS) shows a compositional bias: low complexity. A disordered region spans residues 1113-1151 (SSSSGGFTLHSHSSEGSFEGPSRPGTKEDNVQAKRAKVA).

The protein belongs to the CATSPERG family.

The protein resides in the membrane. The polypeptide is Cation channel sperm-associated protein subunit gamma 1 (Catsperg1) (Mus musculus (Mouse)).